The following is a 195-amino-acid chain: PABIR family member 1 (195 aa).

This sequence belongs to the FAM122 family.

This Homo sapiens (Human) protein is PABIR family member 1.